The sequence spans 63 residues: Metallothionein-2 (63 aa).

The protein belongs to the metallothionein superfamily. Type 6 family.

Its function is as follows. This protein binds cations of several transition elements. The chain is Metallothionein-2 (mtl-2) from Caenorhabditis elegans.